The sequence spans 105 residues: Small ribosomal subunit protein uS10c (105 aa).

The protein belongs to the universal ribosomal protein uS10 family. In terms of assembly, part of the 30S ribosomal subunit.

Its subcellular location is the plastid. It localises to the chloroplast. Functionally, involved in the binding of tRNA to the ribosomes. The protein is Small ribosomal subunit protein uS10c of Porphyra purpurea (Red seaweed).